A 461-amino-acid polypeptide reads, in one-letter code: Regulatory protein AtoC (461 aa).

Positions 6–120 (RILIVDDEDN…ELNLIVQRAL (115 aa)) constitute a Response regulatory domain. Aspartate 55 is subject to 4-aspartylphosphate. At histidine 73 the chain carries Phosphohistidine. A Sigma-54 factor interaction domain is found at 145–374 (ILTNSPAMMD…LSNVIERAVV (230 aa)). ATP-binding positions include 173-180 (GESGTGKE) and 236-245 (ANEGTLLLDE). Residues 433–452 (RTRTALMLGISRRALMYKLQ) constitute a DNA-binding region (H-T-H motif).

In terms of processing, phosphorylated by AtoS. Contains two phosphorylation sites, which are both involved in the transduction of the acetoacetate signal. Asp-55 is probably the primary phosphorylation site, but either both residues can be phosphorylated independently by AtoS or the phosphate group can be transferred between them. Post-translationally, the N-terminus is blocked.

The protein resides in the cytoplasm. Member of the two-component regulatory system AtoS/AtoC. In the presence of acetoacetate, AtoS/AtoC stimulates the expression of the atoDAEB operon, leading to short chain fatty acid catabolism and activation of the poly-(R)-3-hydroxybutyrate (cPHB) biosynthetic pathway. Also induces the operon in response to spermidine. Involved in the regulation of motility and chemotaxis, via transcriptional induction of the flagellar regulon. AtoC acts by binding directly to the promoter region of the target genes. In addition to its role as a transcriptional regulator, functions as a post-translational regulator that inhibits polyamine biosynthesis via regulation of ornithine decarboxylase (ODC). The polypeptide is Regulatory protein AtoC (atoC) (Escherichia coli (strain K12)).